The following is a 503-amino-acid chain: UDP-N-acetylglucosamine--peptide N-acetylglucosaminyltransferase GtfA subunit (503 aa).

The interval 1–78 (MTIYNINLGI…FTDIKIAPTS (78 aa)) is N-terminus R-fold-1. 16-19 (GVEY) provides a ligand contact to UDP. Residues 79–195 (VTVDDVLAYF…VYHFKDKIFY (117 aa)) are extended beta-sheet domain. The interval 196-306 (GKQAFVRAFM…QPKIVTIPVG (111 aa)) is C-terminus R-fold-1. His242 lines the N-acetyl-D-glucosamine pocket. The tract at residues 307–503 (SIDSLTDSSQ…KKTVEEVLHD (197 aa)) is R-fold-2. A UDP-binding site is contributed by Arg328. Glu332 is a binding site for N-acetyl-D-glucosamine. Residues Lys333, Gly358, and 384–385 (HA) contribute to the UDP site. 404–407 (EGFG) contacts N-acetyl-D-glucosamine. Position 408-412 (408-412 (LTLME)) interacts with UDP.

This sequence belongs to the glycosyltransferase group 1 family. Glycosyltransferase 4 subfamily. As to quaternary structure, monomer. Interacts with stabilizing protein GtfB, probably as a heterotetramer with 2 subunits each of GtfA and GtfB, part of the accessory SecA2/SecY2 protein translocation apparatus.

Its subcellular location is the cytoplasm. It is found in the cell membrane. The enzyme catalyses L-seryl-[protein] + UDP-N-acetyl-alpha-D-glucosamine = 3-O-[N-acetyl-alpha-D-glucosaminyl]-L-seryl-[protein] + UDP + H(+). The protein operates within protein modification; protein glycosylation. In terms of biological role, required for the polymorphic O-glycosylation of serine-rich repeat protein PsrP. Catalyzes the first step in glycosylation by transferring N-acetylglucosamine from UDP-GlcNAc to serine residues in PsrP. Part of the accessory SecA2/SecY2 system specifically required to export serine-rich repeat cell wall proteins encoded upstream in the same operon. The GtfA-GtfB complex adds GlcNAc from UDP-GlcNAc to PsrP (experimentally characterized with truncated PsrP-SSR1 constructs); this subunit alone has weak N-acetylglucosaminyl transferase activity that is 10-fold stimulated by GtfB. The complex requires at least a 25 residue-long peptide for activity; the in vitro assay has only been seen to glycosylate Ser residues. The alpha linkage was shown in L.reuteri. This chain is UDP-N-acetylglucosamine--peptide N-acetylglucosaminyltransferase GtfA subunit, found in Streptococcus pneumoniae serotype 4 (strain ATCC BAA-334 / TIGR4).